The following is a 201-amino-acid chain: Small ribosomal subunit protein uS4c (201 aa).

The disordered stretch occupies residues 17-44; sequence ALPGLTNKKPRNGSDLRNQSRSGKKSQY. Residues 89-149 form the S4 RNA-binding domain; the sequence is MRLDNILFRL…DEQKSRALIQ (61 aa).

Belongs to the universal ribosomal protein uS4 family. As to quaternary structure, part of the 30S ribosomal subunit. Contacts protein S5. The interaction surface between S4 and S5 is involved in control of translational fidelity.

It localises to the plastid. The protein localises to the chloroplast. One of the primary rRNA binding proteins, it binds directly to 16S rRNA where it nucleates assembly of the body of the 30S subunit. In terms of biological role, with S5 and S12 plays an important role in translational accuracy. The sequence is that of Small ribosomal subunit protein uS4c (rps4) from Nicotiana sylvestris (Wood tobacco).